A 556-amino-acid chain; its full sequence is Formate--tetrahydrofolate ligase 2 (556 aa).

ATP is bound at residue 65–72 (TPAGEGKS).

It belongs to the formate--tetrahydrofolate ligase family.

It carries out the reaction (6S)-5,6,7,8-tetrahydrofolate + formate + ATP = (6R)-10-formyltetrahydrofolate + ADP + phosphate. It functions in the pathway one-carbon metabolism; tetrahydrofolate interconversion. The sequence is that of Formate--tetrahydrofolate ligase 2 from Streptococcus sanguinis (strain SK36).